The primary structure comprises 412 residues: Eukaryotic initiation factor 4A-III (412 aa).

The segment covering 1-11 has biased composition (gly residues); sequence MSGSAGSGGTT. The interval 1–20 is disordered; it reads MSGSAGSGGTTGSARKRIMK. The Q motif signature appears at 39–67; that stretch reads PTFDTMGLREDLLRGIYAYGFEKPSAIQQ. Residues lysine 61, glutamine 66, and 86 to 91 contribute to the ATP site; that span reads GTGKTA. One can recognise a Helicase ATP-binding domain in the interval 70-240; sequence IKQIIKGRDV…NKFMTDPIRI (171 aa). Residues 188 to 191 carry the DEAD box motif; it reads DEAD. A Helicase C-terminal domain is found at 251–412; sequence GIKQFFVAVE…EMPMNVADLI (162 aa). ATP-binding positions include aspartate 343 and 368-372; that span reads RSGRY.

The protein belongs to the DEAD box helicase family. eIF4A subfamily. In terms of assembly, identified in the spliceosome C complex. Part of the mRNA splicing-dependent exon junction complex (EJC) complex; the core complex contains CASC3, EIF4A3, MAGOH and RBM8A. Component of the ALYREF/THOC4-EJC-RNA complex; in the complex interacts with MAGOH, RBM8A and THOC4 (via the WXHD motif); these interactions are likely specific to RNA-bound EJC. May interact with NOM1. Interacts with POLDIP3. Interacts with CWC22 and PRPF19 in an RNA-independent manner. Direct interaction with CWC22 is mediated by the helicase C-terminal domain. Full interaction with CWC22 occurs only when EIF4A3 is not part of the EJC and prevents EIF4A3 binding to RNA. Interacts with NCBP3.

It is found in the nucleus. The protein localises to the nucleus speckle. Its subcellular location is the cytoplasm. It catalyses the reaction ATP + H2O = ADP + phosphate + H(+). Functionally, ATP-dependent RNA helicase. Involved in pre-mRNA splicing as component of the spliceosome. Core component of the splicing-dependent multiprotein exon junction complex (EJC) deposited at splice junctions on mRNAs. The EJC is a dynamic structure consisting of core proteins and several peripheral nuclear and cytoplasmic associated factors that join the complex only transiently either during EJC assembly or during subsequent mRNA metabolism. The EJC marks the position of the exon-exon junction in the mature mRNA for the gene expression machinery and the core components remain bound to spliced mRNAs throughout all stages of mRNA metabolism thereby influencing downstream processes including nuclear mRNA export, subcellular mRNA localization, translation efficiency and nonsense-mediated mRNA decay (NMD). Its RNA-dependent ATPase and RNA-helicase activities are induced by CASC3, but abolished in presence of the MAGOH-RBM8A heterodimer, thereby trapping the ATP-bound EJC core onto spliced mRNA in a stable conformation. The inhibition of ATPase activity by the MAGOH-RBM8A heterodimer increases the RNA-binding affinity of the EJC. Involved in translational enhancement of spliced mRNAs after formation of the 80S ribosome complex. Binds spliced mRNA in sequence-independent manner, 20-24 nucleotides upstream of mRNA exon-exon junctions. Shows higher affinity for single-stranded RNA in an ATP-bound core EJC complex than after the ATP is hydrolyzed. Involved in the splicing modulation of BCL2L1/Bcl-X (and probably other apoptotic genes); specifically inhibits formation of proapoptotic isoforms; the function is different from the established EJC assembly. Involved in craniofacial development. The polypeptide is Eukaryotic initiation factor 4A-III (EIF4A3) (Gallus gallus (Chicken)).